A 177-amino-acid polypeptide reads, in one-letter code: Large ribosomal subunit protein uL6 (177 aa).

This sequence belongs to the universal ribosomal protein uL6 family. Part of the 50S ribosomal subunit.

Functionally, this protein binds to the 23S rRNA, and is important in its secondary structure. It is located near the subunit interface in the base of the L7/L12 stalk, and near the tRNA binding site of the peptidyltransferase center. The sequence is that of Large ribosomal subunit protein uL6 from Chelativorans sp. (strain BNC1).